The chain runs to 626 residues: DNA mismatch repair protein MutL (626 aa).

Disordered stretches follow at residues S385–V413 and L418–D437.

Belongs to the DNA mismatch repair MutL/HexB family.

Its function is as follows. This protein is involved in the repair of mismatches in DNA. It is required for dam-dependent methyl-directed DNA mismatch repair. May act as a 'molecular matchmaker', a protein that promotes the formation of a stable complex between two or more DNA-binding proteins in an ATP-dependent manner without itself being part of a final effector complex. The protein is DNA mismatch repair protein MutL of Chlorobaculum parvum (strain DSM 263 / NCIMB 8327) (Chlorobium vibrioforme subsp. thiosulfatophilum).